The following is a 380-amino-acid chain: Chorismate synthase (380 aa).

Residues arginine 48 and arginine 53 each coordinate NADP(+). FMN-binding positions include 126–128 (RAS), glycine 284, 299–303 (KPTSS), and arginine 326.

The protein belongs to the chorismate synthase family. Requires FMNH2 as cofactor.

It catalyses the reaction 5-O-(1-carboxyvinyl)-3-phosphoshikimate = chorismate + phosphate. It participates in metabolic intermediate biosynthesis; chorismate biosynthesis; chorismate from D-erythrose 4-phosphate and phosphoenolpyruvate: step 7/7. Catalyzes the anti-1,4-elimination of the C-3 phosphate and the C-6 proR hydrogen from 5-enolpyruvylshikimate-3-phosphate (EPSP) to yield chorismate, which is the branch point compound that serves as the starting substrate for the three terminal pathways of aromatic amino acid biosynthesis. This reaction introduces a second double bond into the aromatic ring system. The chain is Chorismate synthase from Ignicoccus hospitalis (strain KIN4/I / DSM 18386 / JCM 14125).